The following is a 356-amino-acid chain: S-adenosylmethionine:tRNA ribosyltransferase-isomerase (356 aa).

This sequence belongs to the QueA family. In terms of assembly, monomer.

It is found in the cytoplasm. It catalyses the reaction 7-aminomethyl-7-carbaguanosine(34) in tRNA + S-adenosyl-L-methionine = epoxyqueuosine(34) in tRNA + adenine + L-methionine + 2 H(+). It participates in tRNA modification; tRNA-queuosine biosynthesis. Its function is as follows. Transfers and isomerizes the ribose moiety from AdoMet to the 7-aminomethyl group of 7-deazaguanine (preQ1-tRNA) to give epoxyqueuosine (oQ-tRNA). This chain is S-adenosylmethionine:tRNA ribosyltransferase-isomerase, found in Shigella dysenteriae serotype 1 (strain Sd197).